The chain runs to 251 residues: MWRLLTRVPAPLLRMHFSDSWAALPTSAGLKTLLPVPTFENVSIPERSKLKFVERVPLVPKVRREPKNLKDIRGPSTEATDFTEGNFAILALGGGYLHWGHFEMMRLTINRFMDPKNMFAIWRVPAPFKPITRKGVGQRMGGGKGAIDHYVTPVKTGCLVVEMGGRCEFEEVKGILNQVAHKLPFPAKAVSRKTLERMHQNQRERELNNQNPWTFEHIATANMFGIRKFLSPYDLTQKGRYWGKFYMPKRV.

Residues 1 to 29 (MWRLLTRVPAPLLRMHFSDSWAALPTSAG) constitute a mitochondrion transit peptide.

It belongs to the universal ribosomal protein uL16 family. Component of the mitochondrial ribosome large subunit (39S) which comprises a 16S rRNA and about 50 distinct proteins.

Its subcellular location is the mitochondrion. This is Large ribosomal subunit protein uL16m (Mrpl16) from Mus musculus (Mouse).